The sequence spans 146 residues: Hemoglobin subunit beta/beta' (146 aa).

In terms of domain architecture, Globin spans 2-146 (HWSAEEKQLI…VAHALARKYH (145 aa)). The heme b site is built by His63 and His92.

Belongs to the globin family. Heterotetramer of two alpha chains and two beta chains. In terms of tissue distribution, red blood cells.

Its function is as follows. Involved in oxygen transport from the lung to the various peripheral tissues. This Chroicocephalus ridibundus (Black-headed gull) protein is Hemoglobin subunit beta/beta' (HBB).